The sequence spans 362 residues: Small ribosomal subunit protein uS4m (362 aa).

The S4 RNA-binding domain occupies 105–179 (TRFDVILLRL…FYKEILVEKI (75 aa)).

The protein belongs to the universal ribosomal protein uS4 family. As to quaternary structure, component of the mitochondrial ribosome small subunit.

It localises to the mitochondrion. The polypeptide is Small ribosomal subunit protein uS4m (RPS4) (Arabidopsis thaliana (Mouse-ear cress)).